The chain runs to 316 residues: Ribosomal protein L11 methyltransferase (316 aa).

S-adenosyl-L-methionine contacts are provided by threonine 159, glycine 179, aspartate 201, and asparagine 243.

It belongs to the methyltransferase superfamily. PrmA family.

Its subcellular location is the cytoplasm. It catalyses the reaction L-lysyl-[protein] + 3 S-adenosyl-L-methionine = N(6),N(6),N(6)-trimethyl-L-lysyl-[protein] + 3 S-adenosyl-L-homocysteine + 3 H(+). Functionally, methylates ribosomal protein L11. This is Ribosomal protein L11 methyltransferase from Gloeobacter violaceus (strain ATCC 29082 / PCC 7421).